The following is a 144-amino-acid chain: MNHKVLLINGPNLNLLGRREPSVYGHQTLADIVATLSEQAQAAGVELEHIQSNAEFELINAIHATDAQMIIINPAAFTHTSVALRDALLGVDIPFFEVHLSNVHAREPFRHHSYLSDKAIGVICGFGAQGYEFALAAAIKRLKA.

Tyr24 functions as the Proton acceptor in the catalytic mechanism. Substrate-binding residues include Asn73, His79, and Asp86. His99 (proton donor) is an active-site residue. Residues 100–101 (LS) and Arg110 contribute to the substrate site.

This sequence belongs to the type-II 3-dehydroquinase family. In terms of assembly, homododecamer.

It catalyses the reaction 3-dehydroquinate = 3-dehydroshikimate + H2O. It participates in metabolic intermediate biosynthesis; chorismate biosynthesis; chorismate from D-erythrose 4-phosphate and phosphoenolpyruvate: step 3/7. Its function is as follows. Catalyzes a trans-dehydration via an enolate intermediate. The protein is 3-dehydroquinate dehydratase of Shewanella sp. (strain MR-4).